A 710-amino-acid polypeptide reads, in one-letter code: Secretin OutD (710 aa).

A signal peptide spans 1 to 27 (MLGKGIKKSWGWLGLTVLLLGSPCGWA). The segment at 28–105 (AEFSASFKGT…DNGVLKVIRS (78 aa)) is N0. The tract at residues 123-190 (IGDELVTRVV…DIVNTVDKTG (68 aa)) is N1. Positions 192–262 (REMVTVPLTY…VEMIRQLDRK (71 aa)) are N2. An N3 region spans residues 288-399 (GNGTSGNRNS…INQLDIRRPQ (112 aa)). Positions 289–353 (NGTSGNRNSS…AFGSTSSSGG (65 aa)) are disordered. The tract at residues 401–648 (LVEAIIAEIQ…MLFLRPTIIR (248 aa)) is secretin. Positions 691–710 (TYTFRQVQSSISDFYKPEGR) are s domain.

It belongs to the bacterial secretin family. GSP D subfamily. In terms of assembly, forms a cylindrical channel with 15 subunits. Interacts with pilotin OutS.

It localises to the cell outer membrane. Its function is as follows. Involved in a type II secretion system (T2SS, formerly general secretion pathway, GSP) for the export of proteins. Required for the translocation of the multiple pectic enzymes. This subunit forms the outer membrane channel. In Dickeya dadantii (strain 3937) (Erwinia chrysanthemi (strain 3937)), this protein is Secretin OutD (outD).